We begin with the raw amino-acid sequence, 98 residues long: UPF0251 protein Sputcn32_0687 (98 aa).

This sequence belongs to the UPF0251 family.

The chain is UPF0251 protein Sputcn32_0687 from Shewanella putrefaciens (strain CN-32 / ATCC BAA-453).